Consider the following 166-residue polypeptide: MSDLRRKGWWNVPDYFHSPLVFDMEEDKEDYIFGPHDEYLHTLEVHSNTLIQLERWFTPTGQTRVTVVGPLKARLWVMDMIRKVGSKNNLDQIKGKMMLLQIRDHPLRDRDLELHPESGSSLWITTMNDTTFVEVPHFSRFPLTVAWLFCGFVRILGIHNFADLHW.

Positions 19–78 (PLVFDMEEDKEDYIFGPHDEYLHTLEVHSNTLIQLERWFTPTGQTRVTVVGPLKARLWVM) constitute a KH; atypical domain.

The protein belongs to the KHDC1 family.

The chain is KH homology domain-containing protein 1C (Khdc1c) from Mus musculus (Mouse).